The sequence spans 395 residues: Acid ceramidase (395 aa).

A signal peptide spans Met-1–Ala-21. Residues Cys-31 and Cys-340 are joined by a disulfide bond. Cys-143 serves as the catalytic Nucleophile. Asn-195, Asn-259, Asn-286, and Asn-342 each carry an N-linked (GlcNAc...) asparagine glycan. The cysteines at positions 388 and 392 are disulfide-linked.

This sequence belongs to the acid ceramidase family. As to quaternary structure, heterodimer; disulfide-linked. The heterodimer is composed of the disulfide-linked alpha and beta chains produced by autocatalytic cleavage of the precursor. In terms of processing, N-glycosylated. Post-translationally, proteolytically cleaved into two chains alpha and beta that remain associated via a disulfide bond. Cleavage gives rise to a conformation change that activates the enzyme. The same catalytic Cys residue mediates the autoproteolytic cleavage and subsequent hydrolysis of lipid substrates. The beta chain may undergo an additional C-terminal processing.

It is found in the lysosome. Its subcellular location is the secreted. The enzyme catalyses an N-acylsphing-4-enine + H2O = sphing-4-enine + a fatty acid. The catalysed reaction is N-dodecanoylsphing-4-enine + H2O = dodecanoate + sphing-4-enine. It catalyses the reaction N-tetradecanoylsphing-4-enine + H2O = tetradecanoate + sphing-4-enine. It carries out the reaction N-hexadecanoylsphing-4-enine + H2O = sphing-4-enine + hexadecanoate. The enzyme catalyses N-octadecanoylsphing-4-enine + H2O = sphing-4-enine + octadecanoate. The catalysed reaction is N-dodecanoyl-(4R)-hydroxysphinganine + H2O = (4R)-hydroxysphinganine + dodecanoate. It catalyses the reaction N-(dodecanoyl)-sphinganine + H2O = dodecanoate + sphinganine. It carries out the reaction N-(acetyl)-sphing-4-enine + H2O = sphing-4-enine + acetate. The enzyme catalyses N-(hexanoyl)sphing-4-enine + H2O = hexanoate + sphing-4-enine. The catalysed reaction is N-octanoylsphing-4-enine + H2O = octanoate + sphing-4-enine. It catalyses the reaction N-(9Z-octadecenoyl)-sphing-4-enine + H2O = sphing-4-enine + (9Z)-octadecenoate. It carries out the reaction N-dodecanoylethanolamine + H2O = dodecanoate + ethanolamine. The protein operates within lipid metabolism; sphingolipid metabolism. In terms of biological role, lysosomal ceramidase that hydrolyzes sphingolipid ceramides into sphingosine and free fatty acids at acidic pH. Ceramides, sphingosine, and its phosphorylated form sphingosine-1-phosphate are bioactive lipids that mediate cellular signaling pathways regulating several biological processes including cell proliferation, apoptosis and differentiation. Has a higher catalytic efficiency towards C12-ceramides versus other ceramides. Also catalyzes the reverse reaction allowing the synthesis of ceramides from fatty acids and sphingosine. For the reverse synthetic reaction, the natural sphingosine D-erythro isomer is more efficiently utilized as a substrate compared to D-erythro-dihydrosphingosine and D-erythro-phytosphingosine, while the fatty acids with chain lengths of 12 or 14 carbons are the most efficiently used. Also has an N-acylethanolamine hydrolase activity. By regulating the levels of ceramides, sphingosine and sphingosine-1-phosphate in the epidermis, mediates the calcium-induced differentiation of epidermal keratinocytes. Also indirectly regulates tumor necrosis factor/TNF-induced apoptosis. By regulating the intracellular balance between ceramides and sphingosine, in adrenocortical cells, probably also acts as a regulator of steroidogenesis. The chain is Acid ceramidase from Pan troglodytes (Chimpanzee).